We begin with the raw amino-acid sequence, 674 residues long: Forkhead box protein P1 (674 aa).

The span at 1-19 (MMQESGTETKSNGSAIQNG) shows a compositional bias: polar residues. The interval 1–44 (MMQESGTETKSNGSAIQNGSSGGNHLLECGSLREGRSNGETPAV) is disordered. At serine 82 the chain carries Phosphoserine. Residues 269–281 (MNPHASTNGQLSV) are compositionally biased toward polar residues. A disordered region spans residues 269–296 (MNPHASTNGQLSVHTPKRESLSHEEHPH). Over residues 284–296 (PKRESLSHEEHPH) the composition is skewed to basic and acidic residues. Residue lysine 285 forms a Glycyl lysine isopeptide (Lys-Gly) (interchain with G-Cter in SUMO2) linkage. The C2H2-type zinc finger occupies 304–329 (GVCKWPGCEAVCEDFQSFLKHLNSEH). The segment at 346–367 (VQQLELQLAKDKERLQAMMTHL) is leucine-zipper. Glycyl lysine isopeptide (Lys-Gly) (interchain with G-Cter in SUMO2) cross-links involve residues lysine 370 and lysine 375. Residues 380–384 (PLNLV) form a CTBP1-binding region. A compositionally biased stretch (polar residues) spans 388-401 (TLSKSASEASPQSL). The interval 388–427 (TLSKSASEASPQSLPHTPTTPTAPITPATQGPSVITTTSM) is disordered. A compositionally biased stretch (low complexity) spans 402–419 (PHTPTTPTAPITPATQGP). A Glycyl lysine isopeptide (Lys-Gly) (interchain with G-Cter in SUMO2) cross-link involves residue lysine 440. Residues 462-552 (RPPFTYASLI…PQKISGNPSL (91 aa)) constitute a DNA-binding region (fork-head). The disordered stretch occupies residues 608 to 674 (EHTNSNESDS…EDEPVNEDME (67 aa)). Over residues 609 to 620 (HTNSNESDSSPG) the composition is skewed to polar residues. Threonine 650 carries the phosphothreonine modification. Serine 655 carries the phosphoserine modification. Positions 664-674 (YEDEPVNEDME) are enriched in acidic residues.

As to quaternary structure, forms homodimers and heterodimers with FOXP2 and FOXP4. Dimerization is required for DNA-binding. Self-associates. Interacts with CTBP1. Interacts with NCOR2 and AR. Interacts with FOXP2. Interacts with TBR1. Interacts with AURKA; this interaction facilitates the phosphorylation of FOXP1, which suppresses the expression of FBXL7. Interacts with ZMYM2.

It is found in the nucleus. In terms of biological role, transcriptional repressor. Can act with CTBP1 to synergistically repress transcription but CTPBP1 is not essential. Plays an important role in the specification and differentiation of lung epithelium. Acts cooperatively with FOXP4 to regulate lung secretory epithelial cell fate and regeneration by restricting the goblet cell lineage program; the function may involve regulation of AGR2. Essential transcriptional regulator of B-cell development. Involved in regulation of cardiac muscle cell proliferation. Involved in the columnar organization of spinal motor neurons. Promotes the formation of the lateral motor neuron column (LMC) and the preganglionic motor column (PGC) and is required for respective appropriate motor axon projections. The segment-appropriate generation of spinal cord motor columns requires cooperation with other Hox proteins. Can regulate PITX3 promoter activity; may promote midbrain identity in embryonic stem cell-derived dopamine neurons by regulating PITX3. Negatively regulates the differentiation of T follicular helper cells T(FH)s. Involved in maintenance of hair follicle stem cell quiescence; the function probably involves regulation of FGF18. Represses transcription of various pro-apoptotic genes and cooperates with NF-kappa B-signaling in promoting B-cell expansion by inhibition of caspase-dependent apoptosis. Binds to CSF1R promoter elements and is involved in regulation of monocyte differentiation and macrophage functions; repression of CSF1R in monocytes seems to involve NCOR2 as corepressor. Involved in endothelial cell proliferation, tube formation and migration indicative for a role in angiogenesis; the role in neovascularization seems to implicate suppression of SEMA5B. Can negatively regulate androgen receptor signaling. Acts as a transcriptional activator of the FBXL7 promoter; this activity is regulated by AURKA. In Bos taurus (Bovine), this protein is Forkhead box protein P1 (FOXP1).